Here is a 598-residue protein sequence, read N- to C-terminus: DNA mismatch repair protein MutL (598 aa).

Belongs to the DNA mismatch repair MutL/HexB family.

Functionally, this protein is involved in the repair of mismatches in DNA. It is required for dam-dependent methyl-directed DNA mismatch repair. May act as a 'molecular matchmaker', a protein that promotes the formation of a stable complex between two or more DNA-binding proteins in an ATP-dependent manner without itself being part of a final effector complex. This Geotalea daltonii (strain DSM 22248 / JCM 15807 / FRC-32) (Geobacter daltonii) protein is DNA mismatch repair protein MutL.